Reading from the N-terminus, the 300-residue chain is N-acetylmuramic acid 6-phosphate etherase (300 aa).

Positions 57 to 220 (ITHAFAHGGR…TSGAMIRSGK (164 aa)) constitute an SIS domain. Glutamate 85 serves as the catalytic Proton donor. Glutamate 116 is a catalytic residue.

The protein belongs to the GCKR-like family. MurNAc-6-P etherase subfamily. Homodimer.

It catalyses the reaction N-acetyl-D-muramate 6-phosphate + H2O = N-acetyl-D-glucosamine 6-phosphate + (R)-lactate. Its pathway is amino-sugar metabolism; 1,6-anhydro-N-acetylmuramate degradation. It functions in the pathway amino-sugar metabolism; N-acetylmuramate degradation. It participates in cell wall biogenesis; peptidoglycan recycling. Functionally, specifically catalyzes the cleavage of the D-lactyl ether substituent of MurNAc 6-phosphate, producing GlcNAc 6-phosphate and D-lactate. Together with AnmK, is also required for the utilization of anhydro-N-acetylmuramic acid (anhMurNAc) either imported from the medium or derived from its own cell wall murein, and thus plays a role in cell wall recycling. The protein is N-acetylmuramic acid 6-phosphate etherase of Vibrio vulnificus (strain CMCP6).